Consider the following 523-residue polypeptide: Probable 3-ketoacyl-CoA synthase 20 (523 aa).

The next 2 helical transmembrane spans lie at 31–55 and 78–96; these read IVAVTALVAAAPRLSTLLAAAAAGG and ALAVACWAAALAAYTYAAS. In terms of domain architecture, FAE spans 93–382; it reads YAASRPRPVY…RFLATVVLKR (290 aa). Catalysis depends on residues C237, H317, H401, H405, and N438.

It belongs to the thiolase-like superfamily. Chalcone/stilbene synthases family. As to expression, highly expressed in leaf sheaths. Expressed in leaves, flag leaves and panicles.

It localises to the membrane. It carries out the reaction a very-long-chain acyl-CoA + malonyl-CoA + H(+) = a very-long-chain 3-oxoacyl-CoA + CO2 + CoA. Contributes to fatty acids elongation. Plays a role in controlling leaf anatomy and plant architecture. This is Probable 3-ketoacyl-CoA synthase 20 from Oryza sativa subsp. japonica (Rice).